The chain runs to 558 residues: Protein SET DOMAIN GROUP 41 (558 aa).

An SET domain is found at 115–249 (PSISVAIHHA…SGEEITVSYI (135 aa)).

Belongs to the class V-like SAM-binding methyltransferase superfamily.

This Arabidopsis thaliana (Mouse-ear cress) protein is Protein SET DOMAIN GROUP 41 (SDG41).